Consider the following 737-residue polypeptide: Photosystem I P700 chlorophyll a apoprotein A2 (737 aa).

The next 8 helical transmembrane spans lie at 46 to 69 (IFAS…FHVA), 135 to 158 (LYNG…LHLQ), 175 to 199 (LNHH…HVAI), 273 to 291 (IAHH…GHMY), 330 to 353 (LHFQ…QHMY), 369 to 395 (AALY…IFLV), 417 to 439 (AIIS…LYVH), and 520 to 538 (FLVH…LILV). [4Fe-4S] cluster is bound by residues Cys-562 and Cys-571. Transmembrane regions (helical) follow at residues 578–599 (AFYL…YWHW) and 646–668 (LSVW…MFLI). Chlorophyll a is bound by residues His-657, Met-665, and Tyr-673. Residue Trp-674 coordinates phylloquinone. The helical transmembrane segment at 710–730 (LVGLAHFAVGYIVTYAAFLIA) threads the bilayer.

The protein belongs to the PsaA/PsaB family. The PsaA/B heterodimer binds the P700 chlorophyll special pair and subsequent electron acceptors. PSI consists of a core antenna complex that captures photons, and an electron transfer chain that converts photonic excitation into a charge separation. The eukaryotic PSI reaction center is composed of at least 11 subunits. P700 is a chlorophyll a/chlorophyll a' dimer, A0 is one or more chlorophyll a, A1 is one or both phylloquinones and FX is a shared 4Fe-4S iron-sulfur center. is required as a cofactor.

The protein localises to the plastid. The protein resides in the cyanelle thylakoid membrane. The enzyme catalyses reduced [plastocyanin] + hnu + oxidized [2Fe-2S]-[ferredoxin] = oxidized [plastocyanin] + reduced [2Fe-2S]-[ferredoxin]. PsaA and PsaB bind P700, the primary electron donor of photosystem I (PSI), as well as the electron acceptors A0, A1 and FX. PSI is a cytochrome c6-ferredoxin oxidoreductase, converting photonic excitation into a charge separation, which transfers an electron from the donor P700 chlorophyll pair to the spectroscopically characterized acceptors A0, A1, FX, FA and FB in turn. Oxidized P700 is reduced on the lumenal side of the thylakoid membrane by cytochrome c6. The protein is Photosystem I P700 chlorophyll a apoprotein A2 of Cyanophora paradoxa.